A 187-amino-acid chain; its full sequence is Elongation factor P (187 aa).

It belongs to the elongation factor P family.

The protein localises to the cytoplasm. It functions in the pathway protein biosynthesis; polypeptide chain elongation. Involved in peptide bond synthesis. Stimulates efficient translation and peptide-bond synthesis on native or reconstituted 70S ribosomes in vitro. Probably functions indirectly by altering the affinity of the ribosome for aminoacyl-tRNA, thus increasing their reactivity as acceptors for peptidyl transferase. This chain is Elongation factor P, found in Paenarthrobacter aurescens (strain TC1).